The sequence spans 228 residues: Octanoyltransferase (228 aa).

Positions Gly-31–Phe-212 constitute a BPL/LPL catalytic domain. Substrate is bound by residues Arg-76–His-83, Ala-143–Gly-145, and Gly-156–Ala-158. Residue Cys-174 is the Acyl-thioester intermediate of the active site.

It belongs to the LipB family.

Its subcellular location is the cytoplasm. It carries out the reaction octanoyl-[ACP] + L-lysyl-[protein] = N(6)-octanoyl-L-lysyl-[protein] + holo-[ACP] + H(+). Its pathway is protein modification; protein lipoylation via endogenous pathway; protein N(6)-(lipoyl)lysine from octanoyl-[acyl-carrier-protein]: step 1/2. Catalyzes the transfer of endogenously produced octanoic acid from octanoyl-acyl-carrier-protein onto the lipoyl domains of lipoate-dependent enzymes. Lipoyl-ACP can also act as a substrate although octanoyl-ACP is likely to be the physiological substrate. The sequence is that of Octanoyltransferase from Thermoanaerobacter sp. (strain X514).